An 852-amino-acid chain; its full sequence is RNA-binding protein 10 (852 aa).

Composition is skewed to basic and acidic residues over residues 1–14 (MEYERRGGRGDRTG) and 21–45 (RSQDDGGENRSRDHDYRDMDYRSYP). The disordered stretch occupies residues 1–78 (MEYERRGGRG…RGQLQSHGVQ (78 aa)). Positions 37–132 (RDMDYRSYPR…QKVSMHYSDP (96 aa)) constitute an RRM 1 domain. The residue at position 61 (Ser-61) is a Phosphoserine. A RanBP2-type zinc finger spans residues 135–165 (KINEDWLCNKCGVQNFKRREKCFKCGVPKSE). An RRM 2 domain is found at 223-307 (DTIILRNLNP…KTINVEFAKG (85 aa)). Lys-306 bears the N6-acetyllysine mark. 6 disordered regions span residues 343–365 (GGESTWAAPEEPPVDYSYYQQDE), 386–410 (KGPGMTGTKGDTSGAGPETSLEGGT), 426–446 (APGLYQQSAEGSSGQGTATNS), 459–489 (SELQSPTHPSSALPPATSPTAPESYSQYPVP), 542–568 (EQSADGHKDTGASSKEGKEKKEKHKTK), and 634–675 (DLPK…EEKL). Positions 430 to 446 (YQQSAEGSSGQGTATNS) are enriched in polar residues. Positions 463–484 (SPTHPSSALPPATSPTAPESYS) are enriched in low complexity. The segment covering 545-561 (ADGHKDTGASSKEGKEK) has biased composition (basic and acidic residues). A phosphoserine mark is found at Ser-640, Ser-645, Ser-655, Ser-658, and Ser-660. A compositionally biased stretch (basic and acidic residues) spans 665-675 (ERGGPEREEKL). A C2H2-type; atypical zinc finger spans residues 681 to 706 (LACLLCRRQFPSKEALIRHQQLSGLH). Residues Ser-703, Ser-719, and Ser-767 each carry the phosphoserine modification. Positions 740 to 783 (AAERREKYGIPEPPEPKRRKYGGISTASVDFEQPTRDGLGSDNI) are disordered. Residues 780–826 (SDNIGSRMLQAMGWKEGSGLGRKKQGIVTPIEAQTRVRGSGLGARGS) enclose the G-patch domain. Omega-N-methylarginine is present on Arg-824.

Associates with the spliceosome. Component of a large chromatin remodeling complex, at least composed of MYSM1, PCAF, RBM10 and KIF11/TRIP5.

The protein resides in the nucleus. Its function is as follows. Binds to ssRNA containing the consensus sequence 5'-AGGUAA-3'. May be involved in post-transcriptional processing, most probably in mRNA splicing. Binds to RNA homopolymers, with a preference for poly(G) and poly(U) and little for poly(A). May bind to specific miRNA hairpins. This is RNA-binding protein 10 from Rattus norvegicus (Rat).